A 449-amino-acid polypeptide reads, in one-letter code: Phosphoglucosamine mutase (449 aa).

S100 functions as the Phosphoserine intermediate in the catalytic mechanism. Mg(2+) is bound by residues S100, D241, D243, and D245. At S100 the chain carries Phosphoserine.

It belongs to the phosphohexose mutase family. The cofactor is Mg(2+). Activated by phosphorylation.

The enzyme catalyses alpha-D-glucosamine 1-phosphate = D-glucosamine 6-phosphate. Its function is as follows. Catalyzes the conversion of glucosamine-6-phosphate to glucosamine-1-phosphate. The protein is Phosphoglucosamine mutase of Caldicellulosiruptor bescii (strain ATCC BAA-1888 / DSM 6725 / KCTC 15123 / Z-1320) (Anaerocellum thermophilum).